The primary structure comprises 169 residues: Copper-resistant cuproprotein CopI (169 aa).

An N-terminal signal peptide occupies residues 1 to 20 (MIKKTLLVIALTFTVTTAFA). Histidine 98, cysteine 153, histidine 158, and methionine 163 together coordinate Cu(2+).

The protein belongs to the CopI family.

The protein resides in the periplasm. Functionally, involved in copper tolerance. Mediates copper tolerance in aerobiosis. May also mediate tolerance under anaerobiosis. Not required for virulence or colonization in the mouse model. The protein is Copper-resistant cuproprotein CopI of Vibrio cholerae serotype O1 (strain ATCC 39315 / El Tor Inaba N16961).